A 322-amino-acid chain; its full sequence is Olfactory receptor 1J1 (322 aa).

The Extracellular segment spans residues Met-1–Ala-25. Asn-5 is a glycosylation site (N-linked (GlcNAc...) asparagine). Residues Val-26–Ile-49 form a helical membrane-spanning segment. Topologically, residues Gln-50–Thr-57 are cytoplasmic. Residues Pro-58–Pro-79 form a helical membrane-spanning segment. Residues Lys-80–Gln-100 are Extracellular-facing. A disulfide bridge connects residues Cys-97 and Cys-189. Residues Thr-101–Tyr-120 traverse the membrane as a helical segment. The Cytoplasmic portion of the chain corresponds to Asp-121 to Ser-139. The helical transmembrane segment at Gln-140–Leu-158 threads the bilayer. At His-159–Gln-196 the chain is on the extracellular side. The chain crosses the membrane as a helical span at residues Leu-197–Gly-219. The Cytoplasmic portion of the chain corresponds to His-220 to Lys-236. A helical membrane pass occupies residues Ala-237 to Tyr-259. The Extracellular portion of the chain corresponds to Phe-260–Ile-272. A helical membrane pass occupies residues Ile-273–Leu-292. The Cytoplasmic segment spans residues Arg-293–Gly-322.

It belongs to the G-protein coupled receptor 1 family.

It is found in the cell membrane. In terms of biological role, odorant receptor. The polypeptide is Olfactory receptor 1J1 (Homo sapiens (Human)).